Consider the following 310-residue polypeptide: Tagatose-6-phosphate kinase (310 aa).

The protein belongs to the carbohydrate kinase PfkB family. LacC subfamily.

It carries out the reaction D-tagatofuranose 6-phosphate + ATP = D-tagatofuranose 1,6-bisphosphate + ADP + H(+). It participates in carbohydrate metabolism; D-tagatose 6-phosphate degradation; D-glyceraldehyde 3-phosphate and glycerone phosphate from D-tagatose 6-phosphate: step 1/2. The protein is Tagatose-6-phosphate kinase of Lactococcus lactis subsp. lactis (Streptococcus lactis).